The primary structure comprises 459 residues: Putrescine aminotransferase (459 aa).

Pyridoxal 5'-phosphate is bound by residues 150 to 151 and Q274; that span reads GT. K300 is subject to N6-(pyridoxal phosphate)lysine. T332 lines the pyridoxal 5'-phosphate pocket.

Belongs to the class-III pyridoxal-phosphate-dependent aminotransferase family. Putrescine aminotransferase subfamily. It depends on pyridoxal 5'-phosphate as a cofactor.

It catalyses the reaction an alkane-alpha,omega-diamine + 2-oxoglutarate = an omega-aminoaldehyde + L-glutamate. It carries out the reaction putrescine + 2-oxoglutarate = 1-pyrroline + L-glutamate + H2O. The catalysed reaction is cadaverine + 2-oxoglutarate = 5-aminopentanal + L-glutamate. The protein operates within amine and polyamine degradation; putrescine degradation; 4-aminobutanal from putrescine (transaminase route): step 1/1. Functionally, catalyzes the aminotransferase reaction from putrescine to 2-oxoglutarate, leading to glutamate and 4-aminobutanal, which spontaneously cyclizes to form 1-pyrroline. This is the first step in one of two pathways for putrescine degradation, where putrescine is converted into 4-aminobutanoate (gamma-aminobutyrate or GABA) via 4-aminobutanal. Also functions as a cadaverine transaminase in a a L-lysine degradation pathway to succinate that proceeds via cadaverine, glutarate and L-2-hydroxyglutarate. The polypeptide is Putrescine aminotransferase (Salmonella agona (strain SL483)).